A 537-amino-acid chain; its full sequence is Arginine--tRNA ligase (537 aa).

The 'HIGH' region signature appears at alanine 113 to histidine 123.

Belongs to the class-I aminoacyl-tRNA synthetase family. In terms of assembly, monomer.

The protein resides in the cytoplasm. The catalysed reaction is tRNA(Arg) + L-arginine + ATP = L-arginyl-tRNA(Arg) + AMP + diphosphate. This is Arginine--tRNA ligase (argS) from Mycoplasma genitalium (strain ATCC 33530 / DSM 19775 / NCTC 10195 / G37) (Mycoplasmoides genitalium).